The chain runs to 205 residues: MSDTSETICSMCQLFYVNKWVLGTGGGIGIKQDNIAYISPSGIEKELLEPEQIVKYNIQDDTYQCGAPGLKPSACTPLFLELFKTLGASCVIHTHSINAVLCSMIYEKEFTIKDIEQIKAIPKGDGTNLRNVDTLRIPIIDNAPEEQDLMPALKQMIKDYPNACAVLVKRHGLFVWGPTPKKAKIYIESIDYLFEVALKMKELGQ.

Cys-75 serves as a coordination point for substrate. Zn(2+)-binding residues include His-93 and His-95. Glu-116 (proton donor/acceptor) is an active-site residue. His-171 is a binding site for Zn(2+).

This sequence belongs to the aldolase class II family. MtnB subfamily. Zn(2+) is required as a cofactor.

Its subcellular location is the cytoplasm. The enzyme catalyses 5-(methylsulfanyl)-D-ribulose 1-phosphate = 5-methylsulfanyl-2,3-dioxopentyl phosphate + H2O. The protein operates within amino-acid biosynthesis; L-methionine biosynthesis via salvage pathway; L-methionine from S-methyl-5-thio-alpha-D-ribose 1-phosphate: step 2/6. Its function is as follows. Catalyzes the dehydration of methylthioribulose-1-phosphate (MTRu-1-P) into 2,3-diketo-5-methylthiopentyl-1-phosphate (DK-MTP-1-P). The polypeptide is Methylthioribulose-1-phosphate dehydratase (Kluyveromyces lactis (strain ATCC 8585 / CBS 2359 / DSM 70799 / NBRC 1267 / NRRL Y-1140 / WM37) (Yeast)).